The chain runs to 241 residues: Carboxy-S-adenosyl-L-methionine synthase (241 aa).

S-adenosyl-L-methionine-binding positions include tyrosine 38, 63–65 (GCS), 88–89 (DN), 116–117 (DI), asparagine 131, and arginine 198.

The protein belongs to the class I-like SAM-binding methyltransferase superfamily. Cx-SAM synthase family. In terms of assembly, homodimer.

The enzyme catalyses prephenate + S-adenosyl-L-methionine = carboxy-S-adenosyl-L-methionine + 3-phenylpyruvate + H2O. In terms of biological role, catalyzes the conversion of S-adenosyl-L-methionine (SAM) to carboxy-S-adenosyl-L-methionine (Cx-SAM). The polypeptide is Carboxy-S-adenosyl-L-methionine synthase (Histophilus somni (strain 129Pt) (Haemophilus somnus)).